A 146-amino-acid polypeptide reads, in one-letter code: Large ribosomal subunit protein uL15 (146 aa).

The tract at residues 1–54 (MTIKLHDLRPAPGSKTPRTRVGRGEGSKGKTAGRGTKGTKARKQVPTTFEGGQM) is disordered.

This sequence belongs to the universal ribosomal protein uL15 family. In terms of assembly, part of the 50S ribosomal subunit.

Binds to the 23S rRNA. The protein is Large ribosomal subunit protein uL15 of Mycobacterium ulcerans (strain Agy99).